The sequence spans 545 residues: Chaperonin GroEL (545 aa).

Residues 30–33 (TLGP), Lys-51, 87–91 (DGTTT), Gly-415, and Asp-495 each bind ATP.

This sequence belongs to the chaperonin (HSP60) family. Forms a cylinder of 14 subunits composed of two heptameric rings stacked back-to-back. Interacts with the co-chaperonin GroES.

It is found in the cytoplasm. It carries out the reaction ATP + H2O + a folded polypeptide = ADP + phosphate + an unfolded polypeptide.. Functionally, together with its co-chaperonin GroES, plays an essential role in assisting protein folding. The GroEL-GroES system forms a nano-cage that allows encapsulation of the non-native substrate proteins and provides a physical environment optimized to promote and accelerate protein folding. This Shewanella denitrificans (strain OS217 / ATCC BAA-1090 / DSM 15013) protein is Chaperonin GroEL.